The sequence spans 376 residues: Putative glutamate--cysteine ligase 2 (376 aa).

Belongs to the glutamate--cysteine ligase type 2 family. YbdK subfamily.

The enzyme catalyses L-cysteine + L-glutamate + ATP = gamma-L-glutamyl-L-cysteine + ADP + phosphate + H(+). In terms of biological role, ATP-dependent carboxylate-amine ligase which exhibits weak glutamate--cysteine ligase activity. The sequence is that of Putative glutamate--cysteine ligase 2 from Mycobacterium bovis (strain ATCC BAA-935 / AF2122/97).